The following is a 357-amino-acid chain: UDP-N-acetylglucosamine--N-acetylmuramyl-(pentapeptide) pyrophosphoryl-undecaprenol N-acetylglucosamine transferase (357 aa).

UDP-N-acetyl-alpha-D-glucosamine is bound by residues 15-17, Asn-125, Ser-190, and Gln-290; that span reads SGG.

It belongs to the glycosyltransferase 28 family. MurG subfamily.

The protein resides in the cell inner membrane. It carries out the reaction di-trans,octa-cis-undecaprenyl diphospho-N-acetyl-alpha-D-muramoyl-L-alanyl-D-glutamyl-meso-2,6-diaminopimeloyl-D-alanyl-D-alanine + UDP-N-acetyl-alpha-D-glucosamine = di-trans,octa-cis-undecaprenyl diphospho-[N-acetyl-alpha-D-glucosaminyl-(1-&gt;4)]-N-acetyl-alpha-D-muramoyl-L-alanyl-D-glutamyl-meso-2,6-diaminopimeloyl-D-alanyl-D-alanine + UDP + H(+). It participates in cell wall biogenesis; peptidoglycan biosynthesis. Functionally, cell wall formation. Catalyzes the transfer of a GlcNAc subunit on undecaprenyl-pyrophosphoryl-MurNAc-pentapeptide (lipid intermediate I) to form undecaprenyl-pyrophosphoryl-MurNAc-(pentapeptide)GlcNAc (lipid intermediate II). This is UDP-N-acetylglucosamine--N-acetylmuramyl-(pentapeptide) pyrophosphoryl-undecaprenol N-acetylglucosamine transferase from Chlamydia pneumoniae (Chlamydophila pneumoniae).